The following is a 941-amino-acid chain: Coiled-coil and C2 domain-containing protein 1A (941 aa).

Phosphothreonine is present on T91. Disordered stretches follow at residues T183–P248 and S301–P336. The segment covering A228–P239 has biased composition (polar residues). S247 is subject to Phosphoserine. The span at L303–A318 shows a compositional bias: pro residues. Residues K338–H384 adopt a coiled-coil conformation. A disordered region spans residues A428–Q482. S434 carries the phosphoserine modification. Residues A467–G476 are compositionally biased toward low complexity. Residues K475–V508 are a coiled coil. The C2 domain maps to R628 to L762.

The protein belongs to the CC2D1 family. In terms of tissue distribution, strongly expressed in several brain areas including frontal cortex, cortex, mesencephalon, hippocampus, midbrain and hypothalamus. Also expressed in testis and at low levels in pituitary, liver and kidney. In brain the highest levels are detected in hippocampal pyramidal cells and raphe nuclei.

The protein resides in the cytoplasm. It is found in the nucleus. It localises to the cytoskeleton. The protein localises to the microtubule organizing center. Its subcellular location is the centrosome. Functionally, transcription factor that binds specifically to the DRE (dual repressor element) and represses 5-HT1A gene transcription though this element. Mediates HDAC-independent repression of HTR1A promoter. CAMK2G inhibits CC2D1a-induced repression of the HTR1A. May play a role in the altered regulation of 5-HT1A receptors associated with anxiety and major depression. Performs essential function in controlling functional maturation of synapses. The polypeptide is Coiled-coil and C2 domain-containing protein 1A (Cc2d1a) (Rattus norvegicus (Rat)).